Consider the following 451-residue polypeptide: UDP-N-acetylmuramate--L-alanine ligase (451 aa).

An ATP-binding site is contributed by 110 to 116 (GTHGKTT).

The protein belongs to the MurCDEF family.

Its subcellular location is the cytoplasm. The enzyme catalyses UDP-N-acetyl-alpha-D-muramate + L-alanine + ATP = UDP-N-acetyl-alpha-D-muramoyl-L-alanine + ADP + phosphate + H(+). Its pathway is cell wall biogenesis; peptidoglycan biosynthesis. Its function is as follows. Cell wall formation. This chain is UDP-N-acetylmuramate--L-alanine ligase, found in Francisella tularensis subsp. tularensis (strain WY96-3418).